Reading from the N-terminus, the 102-residue chain is Small ribosomal subunit protein uS10 (102 aa).

It belongs to the universal ribosomal protein uS10 family. Part of the 30S ribosomal subunit.

In terms of biological role, involved in the binding of tRNA to the ribosomes. The chain is Small ribosomal subunit protein uS10 from Coprothermobacter proteolyticus (strain ATCC 35245 / DSM 5265 / OCM 4 / BT).